The chain runs to 450 residues: Chromosomal replication initiator protein DnaA (450 aa).

The segment at 1-84 (MTENEQIFWN…AVDYVYEEDL (84 aa)) is domain I, interacts with DnaA modulators. Residues 84–109 (LIIEQQHQGQQGYTEQAFQQLPAVQS) are domain II. Residues 110 to 328 (DLNPKYSFDN…GALKDISLVA (219 aa)) are domain III, AAA+ region. Residues glycine 154, glycine 156, lysine 157, and threonine 158 each contribute to the ATP site. A domain IV, binds dsDNA region spans residues 329-450 (NFKQIDTITV…EIETIKNKIK (122 aa)).

This sequence belongs to the DnaA family. As to quaternary structure, oligomerizes as a right-handed, spiral filament on DNA at oriC.

Its subcellular location is the cytoplasm. In terms of biological role, plays an essential role in the initiation and regulation of chromosomal replication. ATP-DnaA binds to the origin of replication (oriC) to initiate formation of the DNA replication initiation complex once per cell cycle. Binds the DnaA box (a 9 base pair repeat at the origin) and separates the double-stranded (ds)DNA. Forms a right-handed helical filament on oriC DNA; dsDNA binds to the exterior of the filament while single-stranded (ss)DNA is stabiized in the filament's interior. The ATP-DnaA-oriC complex binds and stabilizes one strand of the AT-rich DNA unwinding element (DUE), permitting loading of DNA polymerase. After initiation quickly degrades to an ADP-DnaA complex that is not apt for DNA replication. Binds acidic phospholipids. The polypeptide is Chromosomal replication initiator protein DnaA (Streptococcus equi subsp. zooepidemicus (strain MGCS10565)).